A 120-amino-acid polypeptide reads, in one-letter code: Nascent polypeptide-associated complex protein (120 aa).

The NAC-A/B domain maps to 12-80 (GMNPAKMKQM…VKEVPKSLEI (69 aa)).

Belongs to the NAC-alpha family. In terms of assembly, homodimer. Interacts with the ribosome. Binds ribosomal RNA.

Its function is as follows. Contacts the emerging nascent chain on the ribosome. The sequence is that of Nascent polypeptide-associated complex protein from Methanosarcina mazei (strain ATCC BAA-159 / DSM 3647 / Goe1 / Go1 / JCM 11833 / OCM 88) (Methanosarcina frisia).